Here is a 324-residue protein sequence, read N- to C-terminus: Glyoxylate/hydroxypyruvate reductase B (324 aa).

Active-site residues include Arg237 and Glu266. His285 acts as the Proton donor in catalysis.

It belongs to the D-isomer specific 2-hydroxyacid dehydrogenase family. GhrB subfamily. In terms of assembly, homodimer.

It is found in the cytoplasm. It carries out the reaction glycolate + NADP(+) = glyoxylate + NADPH + H(+). It catalyses the reaction (R)-glycerate + NAD(+) = 3-hydroxypyruvate + NADH + H(+). The catalysed reaction is (R)-glycerate + NADP(+) = 3-hydroxypyruvate + NADPH + H(+). Catalyzes the NADPH-dependent reduction of glyoxylate and hydroxypyruvate into glycolate and glycerate, respectively. The protein is Glyoxylate/hydroxypyruvate reductase B of Citrobacter koseri (strain ATCC BAA-895 / CDC 4225-83 / SGSC4696).